The sequence spans 136 residues: MALQVRVITPDKIVWDGDVEEAILPSTSGQLGILPSHAPLLTNLDIGVMRVRLDKDWKSLVVMGGIAEVEQDILQVLVNSAEIGDDITKEDAQADFSEAQSRLEEANKGSDRREQIKASQAYKRARARLQAAGGLV.

Residues 95–115 form a disordered region; it reads DFSEAQSRLEEANKGSDRREQ. The segment covering 101–115 has biased composition (basic and acidic residues); it reads SRLEEANKGSDRREQ.

This sequence belongs to the ATPase epsilon chain family. F-type ATPases have 2 components, CF(1) - the catalytic core - and CF(0) - the membrane proton channel. CF(1) has five subunits: alpha(3), beta(3), gamma(1), delta(1), epsilon(1). CF(0) has three main subunits: a, b and c.

Its subcellular location is the cellular thylakoid membrane. Produces ATP from ADP in the presence of a proton gradient across the membrane. This Rippkaea orientalis (strain PCC 8801 / RF-1) (Cyanothece sp. (strain PCC 8801)) protein is ATP synthase epsilon chain.